The following is a 156-amino-acid chain: 3-hydroxyacyl-[acyl-carrier-protein] dehydratase FabZ (156 aa).

Residue histidine 57 is part of the active site.

The protein belongs to the thioester dehydratase family. FabZ subfamily.

It localises to the cytoplasm. The enzyme catalyses a (3R)-hydroxyacyl-[ACP] = a (2E)-enoyl-[ACP] + H2O. Its function is as follows. Involved in unsaturated fatty acids biosynthesis. Catalyzes the dehydration of short chain beta-hydroxyacyl-ACPs and long chain saturated and unsaturated beta-hydroxyacyl-ACPs. The sequence is that of 3-hydroxyacyl-[acyl-carrier-protein] dehydratase FabZ from Anaeromyxobacter sp. (strain K).